The primary structure comprises 43 residues: Hemolysin H3C (43 aa).

N-formylmethionine is present on Met-1.

The protein belongs to the staphylococcal hemolytic protein family.

It localises to the secreted. Its function is as follows. Virulence factor. Causes hemolysis of erythrocytes from sheep (HD(50)=2.63 mM), rabbit (HD(50)=2.37 mM), guinea pig (HD(50)=1.98 mM), dog (HD(50)=1.02 mM) and human (HD(50)=2.07 mM). Acts synergistically with beta-hemolysins from S.aureus ATCC 25923. Cytotoxic towards human dermal fibroblasts. This is Hemolysin H3C from Staphylococcus cohnii subsp. cohnii.